The chain runs to 105 residues: Putative zinc finger protein 861 (105 aa).

A C2H2-type zinc finger spans residues 75 to 97 (YTCKPCGNAFRFHHSFHIHERPH).

This Homo sapiens (Human) protein is Putative zinc finger protein 861 (ZNF861P).